The chain runs to 340 residues: Aldose 1-epimerase (340 aa).

R77 is a binding site for substrate. The active-site Proton donor is the H172. Residue D243 participates in substrate binding. The active-site Proton acceptor is E305.

The protein belongs to the aldose epimerase family.

The protein resides in the cytoplasm. It catalyses the reaction alpha-D-glucose = beta-D-glucose. The protein operates within carbohydrate metabolism; hexose metabolism. Functionally, mutarotase converts alpha-aldose to the beta-anomer. It is active on D-glucose, L-arabinose, D-xylose, D-galactose, maltose and lactose. This chain is Aldose 1-epimerase (galM), found in Haemophilus influenzae (strain ATCC 51907 / DSM 11121 / KW20 / Rd).